Reading from the N-terminus, the 517-residue chain is GMP synthase [glutamine-hydrolyzing] (517 aa).

A Glutamine amidotransferase type-1 domain is found at 9-199 (RILILDFGSQ…VLNVCGCEGL (191 aa)). Cys86 serves as the catalytic Nucleophile. Residues His173 and Glu175 contribute to the active site. The GMPS ATP-PPase domain maps to 200-392 (WTSASIIEDA…LGLPYNMLYR (193 aa)). Position 227–233 (227–233 (SGGVDSS)) interacts with ATP.

Homodimer.

The catalysed reaction is XMP + L-glutamine + ATP + H2O = GMP + L-glutamate + AMP + diphosphate + 2 H(+). It functions in the pathway purine metabolism; GMP biosynthesis; GMP from XMP (L-Gln route): step 1/1. In terms of biological role, catalyzes the synthesis of GMP from XMP. This Aliivibrio fischeri (strain ATCC 700601 / ES114) (Vibrio fischeri) protein is GMP synthase [glutamine-hydrolyzing].